Here is a 503-residue protein sequence, read N- to C-terminus: MHLDLIHKSFILVWLIYIRAALADQFTYKACYSASDIRKLGLTYKGVYEYQSVSYCQNECPGQAVVALFNGTGCYCGGSVAQLQSLTQVDSSKCDVSCAGWPYQNCGGSSAMNVYINNAASTADSTSSTATSTSTTSSSSTSVSSKTSTKLDTKTSTSSSATHSSSSSSTTSTTTSSSETTTSSSSSSSSSSTSTTSTTSTTSSTTSTSSSPSTTSSSTSASSSSETSSTQATSSSTTSTSSSTSTATVTSTPSSTSIGTSTHYTTRVVTQSVVSQANQQASTIFTTRTSVYATVSSTSSSTSSLLNGKSSSSKSKGLSGGAIAGVVVGVVCGTVALLALALFFFVWKKRRQSSQHVDLEETKQYQPYSLGDADANPVIPPSASSTNWHIPSRNNTALSKNTASTFATYDLPTRAPGGRDSIITGDAHNISKRSHFPSVVYEEPPSIYNGNQRFSATSLPDMMEERQLHIVNPDNVSSNIGSNVSDGDDDYDDAKDSNNSSLR.

Residues Met-1–Ala-23 form the signal peptide. Residues Asp-24–Gly-325 lie on the Extracellular side of the membrane. Residues Gln-25–Asn-118 enclose the WSC domain. The disordered stretch occupies residues Asp-124–Thr-260. A helical membrane pass occupies residues Val-326–Val-346. Residues Trp-347–Arg-503 are Cytoplasmic-facing. The residue at position 402 (Thr-402) is a Phosphothreonine. A phosphoserine mark is found at Ser-455 and Ser-458. A disordered region spans residues Ile-470–Arg-503.

In terms of processing, N-glycosylated.

It is found in the cell membrane. The protein is Cell wall integrity and stress response component 2 (WSC2) of Saccharomyces cerevisiae (strain ATCC 204508 / S288c) (Baker's yeast).